An 89-amino-acid chain; its full sequence is Putative regulatory protein CLH_1161 (89 aa).

The protein belongs to the RemA family.

This Clostridium botulinum (strain Alaska E43 / Type E3) protein is Putative regulatory protein CLH_1161.